A 242-amino-acid chain; its full sequence is MKVSLFITCLSDVFFPEVGKSVVEIMNQCGVELDFPEGQTCCGQPAYNSGYQEDAKLAAKQMIKAFEHSEYIVTPSGSCASMVHHYYKEMFKGDSEWYEKAVHLADRTYELTDFLVNVLGKNNWKSKLVEKAVFHQSCHMSRALGIKEEPLKLLSQVEGLDIKELPYCQDCCGFGGTFAVKMSSISETMVDEKIKHIEATEANLLIGADMGCLMNIGGRLRRKNKNIQVLHVAEVLAKGLSK.

It belongs to the LutA/YkgE family.

Is involved in L-lactate degradation and allows cells to grow with lactate as the sole carbon source. The sequence is that of Lactate utilization protein A 2 from Bacillus cereus (strain Q1).